Here is a 296-residue protein sequence, read N- to C-terminus: Cobalamin trafficking protein CblD (296 aa).

A mitochondrion-targeting transit peptide spans 1 to 38 (MANVLCNRARLVSYLPGFCSLVKRVVNPKAFSTAGSSG). K203 is modified (N6-acetyllysine).

As to quaternary structure, heterodimer with MMACHC. Forms a multiprotein complex with MMACHC, MTR and MTRR. Widely expressed at high levels.

It is found in the cytoplasm. The protein localises to the mitochondrion. Its function is as follows. Involved in cobalamin metabolism and trafficking. Plays a role in regulating the biosynthesis and the proportion of two coenzymes, methylcob(III)alamin (MeCbl) and 5'-deoxyadenosylcobalamin (AdoCbl). Promotes oxidation of cob(II)alamin bound to MMACHC. The processing of cobalamin in the cytosol occurs in a multiprotein complex composed of at least MMACHC, MMADHC, MTRR (methionine synthase reductase) and MTR (methionine synthase) which may contribute to shuttle safely and efficiently cobalamin towards MTR in order to produce methionine. The chain is Cobalamin trafficking protein CblD from Homo sapiens (Human).